We begin with the raw amino-acid sequence, 137 residues long: Transcription antitermination protein NusB (137 aa).

It belongs to the NusB family.

Its function is as follows. Involved in transcription antitermination. Required for transcription of ribosomal RNA (rRNA) genes. Binds specifically to the boxA antiterminator sequence of the ribosomal RNA (rrn) operons. In Proteus mirabilis (strain HI4320), this protein is Transcription antitermination protein NusB.